A 504-amino-acid polypeptide reads, in one-letter code: Maturase K (504 aa).

It belongs to the intron maturase 2 family. MatK subfamily.

Its subcellular location is the plastid. The protein localises to the chloroplast. Usually encoded in the trnK tRNA gene intron. Probably assists in splicing its own and other chloroplast group II introns. The protein is Maturase K of Lobularia maritima (Sweet alyssum).